Here is a 269-residue protein sequence, read N- to C-terminus: Phycobilisome 37.5 kDa linker polypeptide, phycocyanin-associated, rod (269 aa).

The region spanning 2-177 is the PBS-linker domain; sequence TSSTAARQLG…IYRGYANSDR (176 aa). The CpcD-like domain occupies 217 to 269; it reads GQLYRVRVIQADRGRTTQIRRSIQEYLVSYDQLSPTLQRLNQRGSRVVNISPA.

Belongs to the phycobilisome linker protein family.

It is found in the cellular thylakoid membrane. Functionally, rod linker protein, associated with phycocyanin. Linker polypeptides determine the state of aggregation and the location of the disk-shaped phycobiliprotein units within the phycobilisome and modulate their spectroscopic properties in order to mediate a directed and optimal energy transfer. This is Phycobilisome 37.5 kDa linker polypeptide, phycocyanin-associated, rod (cpcH2) from Microchaete diplosiphon (Fremyella diplosiphon).